A 172-amino-acid chain; its full sequence is Lectin (172 aa).

A signal peptide spans 1-20 (MVWCLADLRAYVLVLLVISG). Residues 36 to 172 (DCTPGWDCHF…ICKYTTPCRY (137 aa)) form the C-type lectin domain. 2 cysteine pairs are disulfide-bonded: Cys-65-Cys-164 and Cys-140-Cys-156. N-linked (GlcNAc...) asparagine glycosylation is present at Asn-93.

As to quaternary structure, heterodimer. Anterior part of oviduct.

The protein resides in the secreted. Functionally, may be involved in protection of eggs and embryos against microorganisms. Calcium-dependent lectin with specificity to D-glucose and D-glucosamine. Can agglutinate microorganisms in vivo. The chain is Lectin (LEC) from Pleurodeles waltl (Iberian ribbed newt).